Consider the following 193-residue polypeptide: 7-methyl-GTP pyrophosphatase (193 aa).

The active-site Proton acceptor is the Asp-70.

This sequence belongs to the Maf family. YceF subfamily. A divalent metal cation is required as a cofactor.

It localises to the cytoplasm. The catalysed reaction is N(7)-methyl-GTP + H2O = N(7)-methyl-GMP + diphosphate + H(+). Functionally, nucleoside triphosphate pyrophosphatase that hydrolyzes 7-methyl-GTP (m(7)GTP). May have a dual role in cell division arrest and in preventing the incorporation of modified nucleotides into cellular nucleic acids. The protein is 7-methyl-GTP pyrophosphatase of Photobacterium profundum (strain SS9).